The following is a 433-amino-acid chain: Homogentisate 1,2-dioxygenase (433 aa).

His288 acts as the Proton acceptor in catalysis. Fe cation is bound by residues His331 and Glu337. Homogentisate contacts are provided by Tyr346 and His367. Residue His367 participates in Fe cation binding.

The protein belongs to the homogentisate dioxygenase family. Hexamer; dimer of trimers. The cofactor is Fe cation.

It catalyses the reaction homogentisate + O2 = 4-maleylacetoacetate + H(+). It functions in the pathway amino-acid degradation; L-phenylalanine degradation; acetoacetate and fumarate from L-phenylalanine: step 4/6. In terms of biological role, involved in the catabolism of homogentisate (2,5-dihydroxyphenylacetate or 2,5-OH-PhAc), a central intermediate in the degradation of phenylalanine and tyrosine. Catalyzes the oxidative ring cleavage of the aromatic ring of homogentisate to yield maleylacetoacetate. This is Homogentisate 1,2-dioxygenase from Pseudomonas putida (strain ATCC 700007 / DSM 6899 / JCM 31910 / BCRC 17059 / LMG 24140 / F1).